Consider the following 330-residue polypeptide: Mas-related G-protein coupled receptor member X2 (330 aa).

The Extracellular segment spans residues 1–33 (MDPTTLVWGTESTTMNGNDQALPLLCGKETLIL). Residues 34-54 (VVLILFIALVGLVGNAFVLWL) form a helical membrane-spanning segment. Topologically, residues 55 to 63 (LGFRMRRNA) are cytoplasmic. The helical transmembrane segment at 64–84 (FSVYVLSLAGADFLFLCFPMI) threads the bilayer. Topologically, residues 85 to 96 (NCLAYLINFFHS) are extracellular. The chain crosses the membrane as a helical span at residues 97-117 (ISINFPSFFTTVMTCAYLAGL). The Cytoplasmic segment spans residues 118-144 (SMLSAISTERCLSVLWPIWYRSRRPRH). The chain crosses the membrane as a helical span at residues 145 to 165 (LSAVMCVLLWALSLLLSILEG). Residues 166–184 (KFCGFLFSDGDSGWCQTFD) are Extracellular-facing. The helical transmembrane segment at 185–205 (FITAAWLMFLFVVLCGSSLAL) threads the bilayer. Residues 206 to 228 (LVRILCGSRGLPLTRLYLTILLT) lie on the Cytoplasmic side of the membrane. Residues 229 to 249 (VLIFLLCGLPFGIQWFLILWI) form a helical membrane-spanning segment. Topologically, residues 250-264 (WKNSDVLFCHIHPVS) are extracellular. Residues 265-285 (VVLSSFNSSANPIIYFFVGSF) form a helical membrane-spanning segment. Topologically, residues 286 to 330 (RKQWRLRQPVLKLALQRALQDTAEVDHSEGCFSQGTLEMSGSSLV) are cytoplasmic.

It belongs to the G-protein coupled receptor 1 family. Mas subfamily.

The protein resides in the cell membrane. Mast cell-specific receptor for basic secretagogues, i.e. cationic amphiphilic drugs, as well as endo- or exogenous peptides, consisting of a basic head group and a hydrophobic core. Recognizes and binds small molecules containing a cyclized tetrahydroisoquinoline (THIQ), such as non-steroidal neuromuscular blocking drugs (NMBDs), including tubocurarine and atracurium. In response to these compounds, mediates pseudo-allergic reactions characterized by histamine release, inflammation and airway contraction. The chain is Mas-related G-protein coupled receptor member X2 (MRGPRX2) from Trachypithecus francoisi (Francois' leaf monkey).